A 495-amino-acid polypeptide reads, in one-letter code: MAVNVRDYIAENYGLFINGEFVKGSSDETIEVTNPATGETLSHITRAKDKDVDHAVKVAQEAFESWSLTSKSERAQMLRDIGDKLMAQKDKIAMIETLNNGKPIRETTAIDIPFAARHFHYFASVIETEEGTVNDIDKDTMSIVRHEPIGVVGAVVAWNFPMLLAAWKIAPAIAAGNTIVIQPSSSTPLSLLEVAKIFQEVLPNGVVNILTGKGSESGNAIFNHDGVDKLSFTGSTDVGYQVAEAAAKHLVPATLELGGKSANIILDDANLDLAVEGIQLGILFNQGEVCSAGSRLLVHEKIYDQLVPRLQEAFSNIKVGDPQDEATQMGSQTGKDQLDKIQSYIDAAKESDAQILAGGHRLTENGLDKGFFFEPTLIAVPDNHHKLAQEEIFGPVLTVIKVKDDQEAIDIANDSEYGLAGGVFSQNITRALNIAKAVRTGRIWINTYNQVPEGAPFGGYKKSGIGRETYKGALSNYQQVKNIYIDTSNALKGLY.

Position 212-218 (212-218) interacts with NAD(+); that stretch reads GKGSESG. Residues Glu256 and Cys290 contribute to the active site.

Belongs to the aldehyde dehydrogenase family.

It catalyses the reaction an aldehyde + NAD(+) + H2O = a carboxylate + NADH + 2 H(+). In Staphylococcus aureus (strain MRSA252), this protein is Putative aldehyde dehydrogenase AldA (aldA).